The following is a 145-amino-acid chain: D-aminoacyl-tRNA deacylase (145 aa).

The Gly-cisPro motif, important for rejection of L-amino acids motif lies at 137-138; the sequence is GP.

Belongs to the DTD family. As to quaternary structure, homodimer.

It localises to the cytoplasm. It carries out the reaction glycyl-tRNA(Ala) + H2O = tRNA(Ala) + glycine + H(+). The enzyme catalyses a D-aminoacyl-tRNA + H2O = a tRNA + a D-alpha-amino acid + H(+). An aminoacyl-tRNA editing enzyme that deacylates mischarged D-aminoacyl-tRNAs. Also deacylates mischarged glycyl-tRNA(Ala), protecting cells against glycine mischarging by AlaRS. Acts via tRNA-based rather than protein-based catalysis; rejects L-amino acids rather than detecting D-amino acids in the active site. By recycling D-aminoacyl-tRNA to D-amino acids and free tRNA molecules, this enzyme counteracts the toxicity associated with the formation of D-aminoacyl-tRNA entities in vivo and helps enforce protein L-homochirality. This is D-aminoacyl-tRNA deacylase from Teredinibacter turnerae (strain ATCC 39867 / T7901).